The following is a 313-amino-acid chain: Ribosomal RNA small subunit methyltransferase H (313 aa).

S-adenosyl-L-methionine contacts are provided by residues 35-37, aspartate 55, phenylalanine 79, aspartate 100, and glutamine 107; that span reads GGH.

The protein belongs to the methyltransferase superfamily. RsmH family.

It localises to the cytoplasm. It catalyses the reaction cytidine(1402) in 16S rRNA + S-adenosyl-L-methionine = N(4)-methylcytidine(1402) in 16S rRNA + S-adenosyl-L-homocysteine + H(+). In terms of biological role, specifically methylates the N4 position of cytidine in position 1402 (C1402) of 16S rRNA. This chain is Ribosomal RNA small subunit methyltransferase H, found in Burkholderia pseudomallei (strain 1106a).